Reading from the N-terminus, the 963-residue chain is Translation initiation factor IF-2 (963 aa).

A compositionally biased stretch (basic and acidic residues) spans 53-77 (SHGQADDSARKKITLTKRETSEIRQ). The segment at 53–377 (SHGQADDSAR…RSNFQAPTEP (325 aa)) is disordered. Polar residues predominate over residues 78–87 (SDATGKTRTV). Basic and acidic residues-rich tracts occupy residues 98–110 (IKRD…HQAD), 123–183 (EEAR…KAEE), 197–250 (DTSR…EAEA), and 267–278 (PSERKAEEKKAE). Residues 343 to 356 (SSGGVGGWRGGPRG) are compositionally biased toward gly residues. The region spanning 463–632 (PRPPVVTVMG…SLQAEVLELK (170 aa)) is the tr-type G domain. Residues 472–479 (GHVDHGKT) form a G1 region. Position 472–479 (472–479 (GHVDHGKT)) interacts with GTP. The G2 stretch occupies residues 497–501 (GITQH). The segment at 518–521 (DTPG) is G3. GTP-binding positions include 518-522 (DTPGH) and 572-575 (NKVD). The G4 stretch occupies residues 572-575 (NKVD). A G5 region spans residues 608-610 (SAK).

This sequence belongs to the TRAFAC class translation factor GTPase superfamily. Classic translation factor GTPase family. IF-2 subfamily.

The protein resides in the cytoplasm. One of the essential components for the initiation of protein synthesis. Protects formylmethionyl-tRNA from spontaneous hydrolysis and promotes its binding to the 30S ribosomal subunits. Also involved in the hydrolysis of GTP during the formation of the 70S ribosomal complex. This is Translation initiation factor IF-2 from Cupriavidus taiwanensis (strain DSM 17343 / BCRC 17206 / CCUG 44338 / CIP 107171 / LMG 19424 / R1) (Ralstonia taiwanensis (strain LMG 19424)).